A 377-amino-acid chain; its full sequence is Nitric oxide reductase FlRd-NAD(+) reductase (377 aa).

This sequence belongs to the FAD-dependent oxidoreductase family. The cofactor is FAD.

Its subcellular location is the cytoplasm. The catalysed reaction is 2 reduced [nitric oxide reductase rubredoxin domain] + NAD(+) + H(+) = 2 oxidized [nitric oxide reductase rubredoxin domain] + NADH. Its pathway is nitrogen metabolism; nitric oxide reduction. Its function is as follows. One of at least two accessory proteins for anaerobic nitric oxide (NO) reductase. Reduces the rubredoxin moiety of NO reductase. This is Nitric oxide reductase FlRd-NAD(+) reductase from Escherichia coli (strain SMS-3-5 / SECEC).